Consider the following 386-residue polypeptide: Phosphoglycerate kinase (386 aa).

Residues 21 to 23 (DLN), Arg-36, 59 to 62 (HLGR), Arg-113, and Arg-146 contribute to the substrate site. Residues Lys-197, Glu-314, and 340–343 (GGDT) contribute to the ATP site.

This sequence belongs to the phosphoglycerate kinase family. As to quaternary structure, monomer.

It localises to the cytoplasm. It carries out the reaction (2R)-3-phosphoglycerate + ATP = (2R)-3-phospho-glyceroyl phosphate + ADP. The protein operates within carbohydrate degradation; glycolysis; pyruvate from D-glyceraldehyde 3-phosphate: step 2/5. This Vibrio campbellii (strain ATCC BAA-1116) protein is Phosphoglycerate kinase.